The primary structure comprises 474 residues: 3-isopropylmalate dehydratase large subunit (474 aa).

3 residues coordinate [4Fe-4S] cluster: Cys353, Cys413, and Cys416.

The protein belongs to the aconitase/IPM isomerase family. LeuC type 1 subfamily. Heterodimer of LeuC and LeuD. It depends on [4Fe-4S] cluster as a cofactor.

It catalyses the reaction (2R,3S)-3-isopropylmalate = (2S)-2-isopropylmalate. The protein operates within amino-acid biosynthesis; L-leucine biosynthesis; L-leucine from 3-methyl-2-oxobutanoate: step 2/4. Its function is as follows. Catalyzes the isomerization between 2-isopropylmalate and 3-isopropylmalate, via the formation of 2-isopropylmaleate. The chain is 3-isopropylmalate dehydratase large subunit from Roseiflexus sp. (strain RS-1).